The following is a 202-amino-acid chain: Imidazoleglycerol-phosphate dehydratase (202 aa).

This sequence belongs to the imidazoleglycerol-phosphate dehydratase family.

It is found in the cytoplasm. It catalyses the reaction D-erythro-1-(imidazol-4-yl)glycerol 3-phosphate = 3-(imidazol-4-yl)-2-oxopropyl phosphate + H2O. The protein operates within amino-acid biosynthesis; L-histidine biosynthesis; L-histidine from 5-phospho-alpha-D-ribose 1-diphosphate: step 6/9. The protein is Imidazoleglycerol-phosphate dehydratase of Sinorhizobium fredii (strain NBRC 101917 / NGR234).